Reading from the N-terminus, the 148-residue chain is Macrodomain Ter protein (148 aa).

Belongs to the MatP family. In terms of assembly, homodimer.

Its subcellular location is the cytoplasm. In terms of biological role, required for spatial organization of the terminus region of the chromosome (Ter macrodomain) during the cell cycle. Prevents early segregation of duplicated Ter macrodomains during cell division. Binds specifically to matS, which is a 13 bp signature motif repeated within the Ter macrodomain. The sequence is that of Macrodomain Ter protein from Haemophilus influenzae (strain ATCC 51907 / DSM 11121 / KW20 / Rd).